The sequence spans 951 residues: WD repeat-containing and planar cell polarity effector protein fritz (951 aa).

WD repeat units follow at residues 304–343 (PMGAQICSFAFSPDQEKLFLGSVDRNICLHDLVQQSTKYA) and 345–384 (QIEIVPNQCAWHCDSAMLCVANERSVLQCFDLALATIGHQ). Polar residues-rich tracts occupy residues 709–720 (TLKSNSSLQQAP), 757–771 (IPDQSAQLGQFSTMP), and 818–828 (SILSNPANPAP). 3 disordered regions span residues 709–776 (TLKS…SPPP), 816–883 (TASI…AARH), and 903–951 (EYLK…FGVV). A compositionally biased stretch (low complexity) spans 930-942 (SSKGGNSSSSSSS).

Belongs to the WD repeat fritz family.

It localises to the cell membrane. The protein resides in the cytoplasm. It is found in the cytoskeleton. The protein localises to the cilium axoneme. Functionally, probable effector of the planar cell polarity signaling pathway which regulates the septin cytoskeleton in both ciliogenesis and collective cell movements. Functions cell autonomously to regulate wing cell hair polarity and number. In Drosophila melanogaster (Fruit fly), this protein is WD repeat-containing and planar cell polarity effector protein fritz (frtz).